The chain runs to 315 residues: Methionyl-tRNA formyltransferase (315 aa).

113–116 (SILP) provides a ligand contact to (6S)-5,6,7,8-tetrahydrofolate.

This sequence belongs to the Fmt family.

The enzyme catalyses L-methionyl-tRNA(fMet) + (6R)-10-formyltetrahydrofolate = N-formyl-L-methionyl-tRNA(fMet) + (6S)-5,6,7,8-tetrahydrofolate + H(+). Functionally, attaches a formyl group to the free amino group of methionyl-tRNA(fMet). The formyl group appears to play a dual role in the initiator identity of N-formylmethionyl-tRNA by promoting its recognition by IF2 and preventing the misappropriation of this tRNA by the elongation apparatus. In Vibrio parahaemolyticus serotype O3:K6 (strain RIMD 2210633), this protein is Methionyl-tRNA formyltransferase.